The primary structure comprises 167 residues: MAMSPAVRNSVIAAISGGAIAIASVLITGPGGNDGLEGVRYKPYKDVVGVLTVCYGHTGKDIMPGKTYTEAECKALLNKDLATVARQINPYIKVDIPETTRGGIYSFVYNVGAGNFETSTLLRKINQVDIKGACDQLRRWTYAGGKQWKGLMTRREIEREVCLWGQQ.

The helical; Signal-anchor for type II membrane protein transmembrane segment at 11-31 threads the bilayer; it reads VIAAISGGAIAIASVLITGPG. Catalysis depends on proton donor/acceptor residues E37 and D46.

The protein belongs to the glycosyl hydrolase 24 family.

The protein resides in the host cell inner membrane. It carries out the reaction Hydrolysis of (1-&gt;4)-beta-linkages between N-acetylmuramic acid and N-acetyl-D-glucosamine residues in a peptidoglycan and between N-acetyl-D-glucosamine residues in chitodextrins.. Functionally, signal-arrest-release (SAR) endolysin with lysozyme activity that degrades host peptidoglycans and participates with the pinholin and spanin proteins in the sequential events which lead to programmed host cell lysis releasing the mature viral particles. Once the pinholin has permeabilized the host cell membrane, the SAR-endolysin is released into the periplasm where it breaks down the peptidoglycan layer. The chain is SAR-endolysin (19) from Bacteriophage PS34.